Reading from the N-terminus, the 409-residue chain is 1-deoxy-D-xylulose 5-phosphate reductoisomerase (409 aa).

NADPH is bound by residues T5, G6, S7, I8, G31, N33, and N122. K123 is a 1-deoxy-D-xylulose 5-phosphate binding site. E124 serves as a coordination point for NADPH. Residue D148 coordinates Mn(2+). 1-deoxy-D-xylulose 5-phosphate-binding residues include S149, E150, S186, and H209. E150 serves as a coordination point for Mn(2+). Residue G215 coordinates NADPH. 1-deoxy-D-xylulose 5-phosphate contacts are provided by S222, N227, K228, and E231. Position 231 (E231) interacts with Mn(2+).

Belongs to the DXR family. The cofactor is Mg(2+). Mn(2+) serves as cofactor.

It catalyses the reaction 2-C-methyl-D-erythritol 4-phosphate + NADP(+) = 1-deoxy-D-xylulose 5-phosphate + NADPH + H(+). Its pathway is isoprenoid biosynthesis; isopentenyl diphosphate biosynthesis via DXP pathway; isopentenyl diphosphate from 1-deoxy-D-xylulose 5-phosphate: step 1/6. In terms of biological role, catalyzes the NADPH-dependent rearrangement and reduction of 1-deoxy-D-xylulose-5-phosphate (DXP) to 2-C-methyl-D-erythritol 4-phosphate (MEP). The protein is 1-deoxy-D-xylulose 5-phosphate reductoisomerase of Parasynechococcus marenigrum (strain WH8102).